We begin with the raw amino-acid sequence, 114 residues long: DNA-binding protein Mbur_0117 (114 aa).

The disordered stretch occupies residues 14–37; the sequence is ELQQQQSSPQNDAQAAYQQEQAQA. A compositionally biased stretch (low complexity) spans 16 to 35; the sequence is QQQQSSPQNDAQAAYQQEQA.

Belongs to the PDCD5 family.

The sequence is that of DNA-binding protein Mbur_0117 from Methanococcoides burtonii (strain DSM 6242 / NBRC 107633 / OCM 468 / ACE-M).